Consider the following 124-residue polypeptide: S-adenosylmethionine decarboxylase proenzyme (124 aa).

S63 serves as the catalytic Schiff-base intermediate with substrate; via pyruvic acid. A Pyruvic acid (Ser); by autocatalysis modification is found at S63. Residue H68 is the Proton acceptor; for processing activity of the active site. C83 acts as the Proton donor; for catalytic activity in catalysis.

It belongs to the prokaryotic AdoMetDC family. Type 1 subfamily. In terms of assembly, heterotetramer of two alpha and two beta chains arranged as a dimer of alpha/beta heterodimers. Pyruvate is required as a cofactor. Is synthesized initially as an inactive proenzyme. Formation of the active enzyme involves a self-maturation process in which the active site pyruvoyl group is generated from an internal serine residue via an autocatalytic post-translational modification. Two non-identical subunits are generated from the proenzyme in this reaction, and the pyruvate is formed at the N-terminus of the alpha chain, which is derived from the carboxyl end of the proenzyme. The post-translation cleavage follows an unusual pathway, termed non-hydrolytic serinolysis, in which the side chain hydroxyl group of the serine supplies its oxygen atom to form the C-terminus of the beta chain, while the remainder of the serine residue undergoes an oxidative deamination to produce ammonia and the pyruvoyl group blocking the N-terminus of the alpha chain.

The catalysed reaction is S-adenosyl-L-methionine + H(+) = S-adenosyl 3-(methylsulfanyl)propylamine + CO2. It functions in the pathway amine and polyamine biosynthesis; S-adenosylmethioninamine biosynthesis; S-adenosylmethioninamine from S-adenosyl-L-methionine: step 1/1. In terms of biological role, catalyzes the decarboxylation of S-adenosylmethionine to S-adenosylmethioninamine (dcAdoMet), the propylamine donor required for the synthesis of the polyamines spermine and spermidine from the diamine putrescine. This is S-adenosylmethionine decarboxylase proenzyme from Acetivibrio thermocellus (strain ATCC 27405 / DSM 1237 / JCM 9322 / NBRC 103400 / NCIMB 10682 / NRRL B-4536 / VPI 7372) (Clostridium thermocellum).